Here is a 423-residue protein sequence, read N- to C-terminus: MSYVIDRRLNGKNKSTVNRQRFLRRYRDHIKKAVEEAVSRRSITDMEHGEQISIPGRDIDEPVLHHGRGGKQTVVHPGNKEFTTGEHIARPQGGGGGKGPGKAGNSGEGMDEFSFQITQEEFLEFMFEDLELPNLVKRNLTGTDTFKTVRAGISNEGNPSRINIIRTLRSAHARRIALSGSSRAKLKEATVELERMKREEPDNFGDIQELEVEIDRLKARIRRVPYLDTFDLKYNLLVKQPNPSSKAVMFCLMDVSGSMTQATKDIAKRFFILLYLFLKRNYDKIDVVFIRHHTSAREVDEEEFFYSRETGGTIVSSALKLMQEIMAERYPSSDWNIYAAQASDGDNWNDDSPICREILTKQIMPFVQYYTYVEITPREHQALWYEYERIGEDYADTFAQQQLVSAGDIYPVFRELFQRRLVS.

Residues 65-110 (HHGRGGKQTVVHPGNKEFTTGEHIARPQGGGGGKGPGKAGNSGEGM) are disordered. The segment covering 92 to 107 (QGGGGGKGPGKAGNSG) has biased composition (gly residues).

This sequence belongs to the UPF0229 family.

This Pseudomonas savastanoi pv. phaseolicola (strain 1448A / Race 6) (Pseudomonas syringae pv. phaseolicola (strain 1448A / Race 6)) protein is UPF0229 protein PSPPH_0628.